A 303-amino-acid polypeptide reads, in one-letter code: tRNA pseudouridine synthase B (303 aa).

The Nucleophile role is filled by Asp53.

This sequence belongs to the pseudouridine synthase TruB family. Type 1 subfamily.

It catalyses the reaction uridine(55) in tRNA = pseudouridine(55) in tRNA. Functionally, responsible for synthesis of pseudouridine from uracil-55 in the psi GC loop of transfer RNAs. This is tRNA pseudouridine synthase B from Zymomonas mobilis subsp. mobilis (strain ATCC 31821 / ZM4 / CP4).